The chain runs to 317 residues: MVLTQLRIASRRSQLAMVQTNWVQAELEQAHPGLSISVEAMATQGDKILDVALAKIGDKGLFTKELEAQMLVGRADIAVHSLKDLPTNLPEGLMLGCVTEREDPADALVVNQKNAEHQLDTLPEGAIVGTSSLRRLAQLRHHYPHLVFKDVRGNVITRLEKLDAGNYDCLILAAAGLTRLGFGDRIHQLIPSEISLHAVGQGALGIECVEGHPEVLEAIKALEHKPTAQRCLAERALLRELEGGCQVPIGVNSRIEANELLLTGMVASLDGKRLIRDQQRGPIDRCEAIGKELAETLKSQGAGEILAEIFAAVRPEA.

The residue at position 245 (C245) is an S-(dipyrrolylmethanemethyl)cysteine.

This sequence belongs to the HMBS family. In terms of assembly, monomer. Requires dipyrromethane as cofactor.

It catalyses the reaction 4 porphobilinogen + H2O = hydroxymethylbilane + 4 NH4(+). The protein operates within porphyrin-containing compound metabolism; protoporphyrin-IX biosynthesis; coproporphyrinogen-III from 5-aminolevulinate: step 2/4. It functions in the pathway porphyrin-containing compound metabolism; chlorophyll biosynthesis. Functionally, tetrapolymerization of the monopyrrole PBG into the hydroxymethylbilane pre-uroporphyrinogen in several discrete steps. The chain is Porphobilinogen deaminase from Prochlorococcus marinus (strain MIT 9313).